Here is a 332-residue protein sequence, read N- to C-terminus: Ferredoxin--NADP reductase (332 aa).

FAD-binding residues include Asp-33, Gln-41, Tyr-46, Ala-86, Met-121, Asp-282, and Ser-325.

Belongs to the ferredoxin--NADP reductase type 2 family. As to quaternary structure, homodimer. The cofactor is FAD.

It carries out the reaction 2 reduced [2Fe-2S]-[ferredoxin] + NADP(+) + H(+) = 2 oxidized [2Fe-2S]-[ferredoxin] + NADPH. The polypeptide is Ferredoxin--NADP reductase (Sulfurisphaera tokodaii (strain DSM 16993 / JCM 10545 / NBRC 100140 / 7) (Sulfolobus tokodaii)).